A 451-amino-acid polypeptide reads, in one-letter code: Plasmepsin III (451 aa).

Residues M1–L37 are Cytoplasmic-facing. Residues M1–G123 constitute a propeptide that is removed on maturation. A helical; Signal-anchor for type II membrane protein membrane pass occupies residues F38–F58. Over E59–L451 the chain is Lumenal. Positions S139–A446 constitute a Peptidase A1 domain. 2 cysteine pairs are disulfide-bonded: C170–C175 and C372–C408.

Belongs to the peptidase A1 family. As to quaternary structure, probable homodimer; in the zymogen form. Monomer; in the active form. Acidification disrupts homodimerization. Component of the hemozoin formation complex (HFC) composed of falcipains FP2A and/or FP2B, plasmepsins PMII, PMIII/HAP and PMIV, heme detoxifying protein HDP and falcilysin FLN. The HFC complex is involved in hemoglobin degradation and detoxification of heme in the food vacuole during the asexual blood stage. Proteolytically cleaved into the soluble active mature form by cysteine proteases in the digestive vacuole of trophozoites. Proteolysis requires an acidic environment. Transprocessing may serve as an alternate activation system.

It localises to the membrane. The protein resides in the vacuole lumen. The catalysed reaction is Hydrolysis of the bonds linking certain hydrophobic residues in hemoglobin or globin. Also cleaves small molecules substrates such as Ala-Leu-Glu-Arg-Thr-Phe-|-Phe(NO2)-Ser-Phe-Pro-Thr.. Dimerization causes loss of catalytic activity. Inhibited by pepstatin A. Inhibited by Zn(2+). In terms of biological role, during the asexual blood stage, catalyzes the cleavage of denatured host hemoglobin (Hb) or globins. Digestion of host Hb is an essential step which provides the parasite with amino acids for protein synthesis, and regulates osmolarity. The polypeptide is Plasmepsin III (Plasmodium falciparum (isolate 3D7)).